A 254-amino-acid polypeptide reads, in one-letter code: tRNA (guanine-N(1)-)-methyltransferase (254 aa).

S-adenosyl-L-methionine-binding positions include Gly-117 and 136–141; that span reads LGDFVL.

Belongs to the RNA methyltransferase TrmD family. In terms of assembly, homodimer.

It localises to the cytoplasm. The enzyme catalyses guanosine(37) in tRNA + S-adenosyl-L-methionine = N(1)-methylguanosine(37) in tRNA + S-adenosyl-L-homocysteine + H(+). In terms of biological role, specifically methylates guanosine-37 in various tRNAs. This is tRNA (guanine-N(1)-)-methyltransferase from Levilactobacillus brevis (strain ATCC 367 / BCRC 12310 / CIP 105137 / JCM 1170 / LMG 11437 / NCIMB 947 / NCTC 947) (Lactobacillus brevis).